The primary structure comprises 676 residues: UvrABC system protein B (676 aa).

Residues glutamate 26 to valine 414 enclose the Helicase ATP-binding domain. Glycine 39–threonine 46 contributes to the ATP binding site. A Beta-hairpin motif is present at residues tyrosine 92 to valine 115. The region spanning glutamine 432–methionine 598 is the Helicase C-terminal domain. Positions glutamate 636–glutamine 671 constitute a UVR domain.

It belongs to the UvrB family. As to quaternary structure, forms a heterotetramer with UvrA during the search for lesions. Interacts with UvrC in an incision complex.

The protein localises to the cytoplasm. The UvrABC repair system catalyzes the recognition and processing of DNA lesions. A damage recognition complex composed of 2 UvrA and 2 UvrB subunits scans DNA for abnormalities. Upon binding of the UvrA(2)B(2) complex to a putative damaged site, the DNA wraps around one UvrB monomer. DNA wrap is dependent on ATP binding by UvrB and probably causes local melting of the DNA helix, facilitating insertion of UvrB beta-hairpin between the DNA strands. Then UvrB probes one DNA strand for the presence of a lesion. If a lesion is found the UvrA subunits dissociate and the UvrB-DNA preincision complex is formed. This complex is subsequently bound by UvrC and the second UvrB is released. If no lesion is found, the DNA wraps around the other UvrB subunit that will check the other stand for damage. The protein is UvrABC system protein B of Vibrio vulnificus (strain CMCP6).